The sequence spans 89 residues: Small ribosomal subunit protein uS15 (89 aa).

Belongs to the universal ribosomal protein uS15 family. As to quaternary structure, part of the 30S ribosomal subunit. Forms a bridge to the 50S subunit in the 70S ribosome, contacting the 23S rRNA.

Functionally, one of the primary rRNA binding proteins, it binds directly to 16S rRNA where it helps nucleate assembly of the platform of the 30S subunit by binding and bridging several RNA helices of the 16S rRNA. Forms an intersubunit bridge (bridge B4) with the 23S rRNA of the 50S subunit in the ribosome. The chain is Small ribosomal subunit protein uS15 from Streptococcus pyogenes serotype M2 (strain MGAS10270).